Here is a 241-residue protein sequence, read N- to C-terminus: Probable transcriptional regulatory protein RALTA_A0859 (241 aa).

Belongs to the TACO1 family.

It is found in the cytoplasm. In Cupriavidus taiwanensis (strain DSM 17343 / BCRC 17206 / CCUG 44338 / CIP 107171 / LMG 19424 / R1) (Ralstonia taiwanensis (strain LMG 19424)), this protein is Probable transcriptional regulatory protein RALTA_A0859.